The sequence spans 468 residues: 3-isopropylmalate dehydratase large subunit (468 aa).

Positions 347, 407, and 410 each coordinate [4Fe-4S] cluster.

Belongs to the aconitase/IPM isomerase family. LeuC type 1 subfamily. Heterodimer of LeuC and LeuD. [4Fe-4S] cluster is required as a cofactor.

The enzyme catalyses (2R,3S)-3-isopropylmalate = (2S)-2-isopropylmalate. It functions in the pathway amino-acid biosynthesis; L-leucine biosynthesis; L-leucine from 3-methyl-2-oxobutanoate: step 2/4. Its function is as follows. Catalyzes the isomerization between 2-isopropylmalate and 3-isopropylmalate, via the formation of 2-isopropylmaleate. The protein is 3-isopropylmalate dehydratase large subunit of Campylobacter jejuni subsp. jejuni serotype O:23/36 (strain 81-176).